A 120-amino-acid polypeptide reads, in one-letter code: ATP synthase subunit a (120 aa).

Transmembrane regions (helical) follow at residues 2-22, 29-49, 59-79, and 94-116; these read FFYSLFKGTYNFIYVTIYSYL, FFPFFFYLFLFICLSNLVGIV, LNITFSLSFLVWWATCLLGFY, and IPFVLVPFWALIEVISFIFRSVG.

The protein belongs to the ATPase A chain family. In terms of assembly, F-type ATPases have 2 components, CF(1) - the catalytic core - and CF(0) - the membrane proton channel. CF(1) has five subunits: alpha(3), beta(3), gamma(1), delta(1), epsilon(1). CF(0) has three main subunits: a, b and c.

The protein localises to the mitochondrion inner membrane. Functionally, mitochondrial membrane ATP synthase (F(1)F(0) ATP synthase or Complex V) produces ATP from ADP in the presence of a proton gradient across the membrane which is generated by electron transport complexes of the respiratory chain. F-type ATPases consist of two structural domains, F(1) - containing the extramembraneous catalytic core and F(0) - containing the membrane proton channel, linked together by a central stalk and a peripheral stalk. During catalysis, ATP synthesis in the catalytic domain of F(1) is coupled via a rotary mechanism of the central stalk subunits to proton translocation. Key component of the proton channel; it may play a direct role in the translocation of protons across the membrane. This chain is ATP synthase subunit a (ATP6), found in Naegleria fowleri (Brain eating amoeba).